The primary structure comprises 333 residues: HTH-type transcriptional repressor PurR (333 aa).

The 55-residue stretch at Ala2–Cys56 folds into the HTH lacI-type domain. Positions Ile4 to Asn23 form a DNA-binding region, H-T-H motif. The DNA-binding element occupies Ser48–Cys56. Residues Phe73, Lys189, Thr191, Phe220, and Asp274 each coordinate hypoxanthine.

As to quaternary structure, homodimer.

It functions in the pathway purine metabolism; purine nucleotide biosynthesis [regulation]. Functionally, is the main repressor of the genes involved in the de novo synthesis of purine nucleotides, regulating purB, purC, purEK, purF, purHD, purL, purMN and guaBA expression. PurR is allosterically activated to bind its cognate DNA by binding the purine corepressors, hypoxanthine or guanine, thereby effecting transcription repression. This is HTH-type transcriptional repressor PurR from Aliivibrio salmonicida (strain LFI1238) (Vibrio salmonicida (strain LFI1238)).